Consider the following 160-residue polypeptide: uncharacterized protein (160 aa).

4 helical membrane-spanning segments follow: residues 7 to 27 (IFLKIALVLIGIPILALCIFL), 48 to 68 (LVFIYLYVTAIPFYFALYQAF), 95 to 115 (AVTISIFYAAGMPVFYLMAEI), and 121 to 141 (IIVIGLVIIFASMVIAVFAAV).

The protein resides in the cell membrane. This is an uncharacterized protein from Bacillus subtilis (strain 168).